The chain runs to 238 residues: 2-C-methyl-D-erythritol 4-phosphate cytidylyltransferase (238 aa).

It belongs to the IspD/TarI cytidylyltransferase family. IspD subfamily.

The catalysed reaction is 2-C-methyl-D-erythritol 4-phosphate + CTP + H(+) = 4-CDP-2-C-methyl-D-erythritol + diphosphate. It functions in the pathway isoprenoid biosynthesis; isopentenyl diphosphate biosynthesis via DXP pathway; isopentenyl diphosphate from 1-deoxy-D-xylulose 5-phosphate: step 2/6. Its function is as follows. Catalyzes the formation of 4-diphosphocytidyl-2-C-methyl-D-erythritol from CTP and 2-C-methyl-D-erythritol 4-phosphate (MEP). The chain is 2-C-methyl-D-erythritol 4-phosphate cytidylyltransferase from Acinetobacter baumannii (strain ATCC 17978 / DSM 105126 / CIP 53.77 / LMG 1025 / NCDC KC755 / 5377).